The primary structure comprises 461 residues: Nicotianamine aminotransferase A (461 aa).

A disordered region spans residues 1-29; it reads MVHQSNGHGEAAAAAANGKSNGHAAAANG. The segment covering 11-29 has biased composition (low complexity); sequence AAAAAANGKSNGHAAAANG. N6-(pyridoxal phosphate)lysine is present on Lys289.

Belongs to the class-I pyridoxal-phosphate-dependent aminotransferase family. Pyridoxal 5'-phosphate is required as a cofactor. In terms of tissue distribution, expressed in roots, but not in leaves.

The enzyme catalyses nicotianamine + 2-oxoglutarate = 3''-deamino-3''-oxonicotianamine + L-glutamate. In terms of biological role, involved in biosynthesis of mugineic acid family phytosiderophores. This is Nicotianamine aminotransferase A from Hordeum vulgare (Barley).